The chain runs to 257 residues: Transmembrane protein C257L (257 aa).

2 helical membrane-spanning segments follow: residues 123–143 (LELL…FTAL) and 163–183 (MMIF…YVLV).

It belongs to the asfivirus C257R family.

The protein resides in the host membrane. Its subcellular location is the virion. This chain is Transmembrane protein C257L, found in African swine fever virus (strain Badajoz 1971 Vero-adapted) (Ba71V).